The primary structure comprises 352 residues: Selenide, water dikinase (352 aa).

Cys-23 is an active-site residue. Residues Lys-26 and 54-56 (SRD) each bind ATP. Residue Asp-57 coordinates Mg(2+). ATP is bound by residues Asp-74, Asp-97, and 145 to 147 (GHS). Position 97 (Asp-97) interacts with Mg(2+). Position 233 (Asp-233) interacts with Mg(2+).

It belongs to the selenophosphate synthase 1 family. Class I subfamily. Homodimer. Requires Mg(2+) as cofactor.

The enzyme catalyses hydrogenselenide + ATP + H2O = selenophosphate + AMP + phosphate + 2 H(+). Its function is as follows. Synthesizes selenophosphate from selenide and ATP. The polypeptide is Selenide, water dikinase (Shewanella sp. (strain MR-4)).